A 183-amino-acid chain; its full sequence is Dual-action ribosomal maturation protein DarP (183 aa).

The segment at 1–23 (MTKQPDDWLDEVPDNENDDDDDE) is disordered. Positions 7-23 (DWLDEVPDNENDDDDDE) are enriched in acidic residues.

It belongs to the DarP family.

The protein resides in the cytoplasm. In terms of biological role, member of a network of 50S ribosomal subunit biogenesis factors which assembles along the 30S-50S interface, preventing incorrect 23S rRNA structures from forming. Promotes peptidyl transferase center (PTC) maturation. This is Dual-action ribosomal maturation protein DarP from Cronobacter sakazakii (strain ATCC BAA-894) (Enterobacter sakazakii).